A 201-amino-acid polypeptide reads, in one-letter code: UPF0301 protein Mvan_6057 (201 aa).

This sequence belongs to the UPF0301 (AlgH) family.

The protein is UPF0301 protein Mvan_6057 of Mycolicibacterium vanbaalenii (strain DSM 7251 / JCM 13017 / BCRC 16820 / KCTC 9966 / NRRL B-24157 / PYR-1) (Mycobacterium vanbaalenii).